The chain runs to 479 residues: MSDTPTRKTDLRVIIVGGSVAGLTLAHCLANANIDHIVLEKRAEISPQEGAFLGIWPNGGRIFDQLGVYADLEKCTVPIHKMRVRFPDGVSFSSELPRQVQERFGYPIISLDRQKVLEILYNRYPAKSNIHVNKKVTEIRQTEREAQVLTADGAVYKGDLVVGADGIHSAVRAEMWRQAKDLVGRRDRQDVNHEIAAFTVEYACVFGISSPISGLESGEHVNSYSNGLCVITFHGKDGRVFWFILIKLQKRFIYPFTPRFSASDAAKICAEYANVPVWGDICVRDLWGNKTSVSMTALEEGLLETWRFKRVVLLGDSIHKMTPNIGQGANTAAEDAGVLASLLQRLSTSDSSATSCTIDAVLQEYASLRYERVKSTYQRAYFGARLHTRDDALKAFVGRYIFPRFRQQVLERTSQAIAGAPQVDFLPTPKRTGPGWSDYAGSPEVGAPTLPWLVISLPVLASMLCYLVYSSVFVTPIFP.

FAD-binding residues include Glu-40, Gly-54, and Arg-113. Tyr-224 is an active-site residue. Asn-289 is a glycosylation site (N-linked (GlcNAc...) asparagine). The FAD site is built by Asp-316 and Ala-329. Residues 449-469 (TLPWLVISLPVLASMLCYLVY) traverse the membrane as a helical segment.

It belongs to the paxM FAD-dependent monooxygenase family. FAD serves as cofactor.

It is found in the membrane. Its pathway is secondary metabolite biosynthesis; terpenoid biosynthesis. Its function is as follows. FAD-dependent monooxygenase; part of the gene cluster B that mediates the biosynthesis of austinol and dehydroaustinol, two fungal meroterpenoids. The first step of the pathway is the synthesis of 3,5-dimethylorsellinic acid by the polyketide synthase ausA. 3,5-dimethylorsellinic acid is then prenylated by the polyprenyl transferase ausN. Further epoxidation by the FAD-dependent monooxygenase ausM and cyclization by the probable terpene cyclase ausL lead to the formation of protoaustinoid A. Protoaustinoid A is then oxidized to spiro-lactone preaustinoid A3 by the combined action of the FAD-binding monooxygenases ausB and ausC, and the dioxygenase ausE. Acid-catalyzed keto-rearrangement and ring contraction of the tetraketide portion of preaustinoid A3 by ausJ lead to the formation of preaustinoid A4. The aldo-keto reductase ausK, with the help of ausH, is involved in the next step by transforming preaustinoid A4 into isoaustinone which is in turn hydroxylated by the P450 monooxygenase ausI to form austinolide. Finally, the cytochrome P450 monooxygenase ausG modifies austinolide to austinol. Austinol can be further modified to dehydroaustinol which forms a diffusible complex with diorcinol that initiates conidiation. Due to genetic rearrangements of the clusters and the subsequent loss of some enzymes, the end products of the Emericella nidulans austinoid biosynthesis clusters are austinol and dehydroaustinol, even if additional enzymes, such as the O-acetyltransferase ausQ and the cytochrome P450 monooxygenase ausR are still functional. This chain is FAD-dependent monooxygenase ausM, found in Emericella nidulans (strain FGSC A4 / ATCC 38163 / CBS 112.46 / NRRL 194 / M139) (Aspergillus nidulans).